The sequence spans 143 residues: Transcriptional regulator MraZ (143 aa).

2 consecutive SpoVT-AbrB domains span residues 5–47 and 76–119; these read EFEH…PMTE and ATEC…SAER.

Belongs to the MraZ family. As to quaternary structure, forms oligomers.

Its subcellular location is the cytoplasm. The protein localises to the nucleoid. This Levilactobacillus brevis (strain ATCC 367 / BCRC 12310 / CIP 105137 / JCM 1170 / LMG 11437 / NCIMB 947 / NCTC 947) (Lactobacillus brevis) protein is Transcriptional regulator MraZ.